Reading from the N-terminus, the 63-residue chain is Large ribosomal subunit protein bL35 (63 aa).

It belongs to the bacterial ribosomal protein bL35 family.

This Finegoldia magna (strain ATCC 29328 / DSM 20472 / WAL 2508) (Peptostreptococcus magnus) protein is Large ribosomal subunit protein bL35.